Here is a 126-residue protein sequence, read N- to C-terminus: Small ribosomal subunit protein bS6 (126 aa).

The segment at 103–126 is disordered; that stretch reads LKAKDERKAPEALVEEVEAEDADE. A compositionally biased stretch (acidic residues) spans 115 to 126; it reads LVEEVEAEDADE.

Belongs to the bacterial ribosomal protein bS6 family.

Binds together with bS18 to 16S ribosomal RNA. In Glaesserella parasuis serovar 5 (strain SH0165) (Haemophilus parasuis), this protein is Small ribosomal subunit protein bS6.